Here is a 432-residue protein sequence, read N- to C-terminus: Dihydroorotase (432 aa).

Positions 60 and 62 each coordinate Zn(2+). Residues 62-64 (HLR) and asparagine 94 contribute to the substrate site. 3 residues coordinate Zn(2+): aspartate 152, histidine 179, and histidine 232. Asparagine 278 contacts substrate. Aspartate 305 is a binding site for Zn(2+). Aspartate 305 is a catalytic residue. Substrate contacts are provided by residues histidine 309 and 323 to 324 (FG).

This sequence belongs to the metallo-dependent hydrolases superfamily. DHOase family. Class I DHOase subfamily. Zn(2+) serves as cofactor.

The catalysed reaction is (S)-dihydroorotate + H2O = N-carbamoyl-L-aspartate + H(+). The protein operates within pyrimidine metabolism; UMP biosynthesis via de novo pathway; (S)-dihydroorotate from bicarbonate: step 3/3. In terms of biological role, catalyzes the reversible cyclization of carbamoyl aspartate to dihydroorotate. The sequence is that of Dihydroorotase from Elusimicrobium minutum (strain Pei191).